The following is a 568-amino-acid chain: Protein AF-9 (568 aa).

Residues Met-1 to Ala-138 form the YEATS domain. Histone H3K9cr binding stretches follow at residues Tyr-78–Gly-80 and Leu-106–Leu-108. Residues Ala-138–Asn-475 form a disordered region. Residues Ser-149–Ser-190 show a composition bias toward low complexity. Basic and acidic residues predominate over residues Glu-202–Pro-265. Residues Ser-288 and Ser-294 each carry the phosphoserine modification. The short motif at Ala-295 to Lys-300 is the Nuclear localization signal element. The segment covering Ser-303 to Ala-313 has biased composition (low complexity). Positions Ala-322–Lys-349 are enriched in basic and acidic residues. Lys-339 is covalently cross-linked (Glycyl lysine isopeptide (Lys-Gly) (interchain with G-Cter in SUMO2)). Positions Asp-357–Glu-368 are enriched in acidic residues. A compositionally biased stretch (low complexity) spans Ser-371–Ser-395. Residues Ser-412 and Ser-419 each carry the phosphoserine modification. Acidic residues predominate over residues Asp-414–Ser-429. Over residues Val-445–Pro-461 the composition is skewed to low complexity. Residue Ser-483 is modified to Phosphoserine.

As to quaternary structure, component of the super elongation complex (SEC), at least composed of EAF1, EAF2, CDK9, MLLT3/AF9, AFF (AFF1 or AFF4), the P-TEFb complex and ELL (ELL, ELL2 or ELL3). Interacts with BCOR. Interacts with CBX8. Interacts with ALKBH4. As to expression, enriched in undifferentiated hematopoietic stem cells in fetal liver, cord blood and bone marrow.

It is found in the nucleus. The protein localises to the chromosome. Its activity is regulated as follows. Crotonylated lysine binding is strongly inhibited by the peptide XL-07i, carrying a 2-furancarbonyl side chain and capped with a hydrophobic carboxybenzyl group. XL-07i targets the unique pi-pi-pi stacking interaction at the crotonylation recognition site. In terms of biological role, chromatin reader component of the super elongation complex (SEC), a complex required to increase the catalytic rate of RNA polymerase II transcription by suppressing transient pausing by the polymerase at multiple sites along the DNA. Specifically recognizes and binds acylated histone H3, with a preference for histone H3 that is crotonylated. Crotonylation marks active promoters and enhancers and confers resistance to transcriptional repressors. Recognizes and binds histone H3 crotonylated at 'Lys-9' (H3K9cr), and with slightly lower affinity histone H3 crotonylated at 'Lys-18' (H3K18cr). Also recognizes and binds histone H3 acetylated and butyrylated at 'Lys-9' (H3K9ac and H3K9bu, respectively), but with lower affinity than crotonylated histone H3. In the SEC complex, MLLT3 is required to recruit the complex to crotonylated histones. Recruitment of the SEC complex to crotonylated histones promotes recruitment of DOT1L on active chromatin to deposit histone H3 'Lys-79' methylation (H3K79me). Plays a key role in hematopoietic stem cell (HSC) maintenance by preserving, rather than conferring, HSC stemness. Acts by binding to the transcription start site of active genes in HSCs and sustaining level of H3K79me2, probably by recruiting DOT1L. This chain is Protein AF-9, found in Homo sapiens (Human).